Here is a 301-residue protein sequence, read N- to C-terminus: Probable alpha-L-glutamate ligase (301 aa).

The ATP-grasp domain occupies 104–287 (LQLLSRRGVG…VAGLIIQYLE (184 aa)). Residues Lys141, 178 to 179 (EY), Asp187, and 211 to 213 (RSN) each bind ATP. Residues Asp248, Glu260, and Asn262 each contribute to the Mg(2+) site. Mn(2+)-binding residues include Asp248, Glu260, and Asn262.

This sequence belongs to the RimK family. Mg(2+) is required as a cofactor. The cofactor is Mn(2+).

This is Probable alpha-L-glutamate ligase from Stutzerimonas stutzeri (strain A1501) (Pseudomonas stutzeri).